We begin with the raw amino-acid sequence, 303 residues long: Sulfotransferase 6B1 (303 aa).

65–70 (KCGSNW) serves as a coordination point for 3'-phosphoadenylyl sulfate. Residue H118 is the Proton acceptor of the active site. 3'-phosphoadenylyl sulfate contacts are provided by residues R140, S148, Y203, 237 to 242 (STFQAM), and 259 to 261 (RKG).

Belongs to the sulfotransferase 1 family.

It localises to the cytoplasm. The protein localises to the cytosol. It catalyses the reaction thyroxine + 3'-phosphoadenylyl sulfate = thyroxine sulfate + adenosine 3',5'-bisphosphate + H(+). Its function is as follows. Sulfotransferase that utilizes 3'-phospho-5'-adenylyl sulfate (PAPS) as sulfonate donor to catalyze the sulfate conjugation of thyroxine. Involved in the metabolism of thyroxine. This is Sulfotransferase 6B1 (SULT6B1) from Pan troglodytes (Chimpanzee).